Here is a 218-residue protein sequence, read N- to C-terminus: Interleukin-37 (218 aa).

Residues 1–40 (MSFVGENSGVKMGSEDWEKDEPQCCLEDPAGSPLEPGPSL) are disordered. A propeptide spans 1–45 (MSFVGENSGVKMGSEDWEKDEPQCCLEDPAGSPLEPGPSLPTMNF) (removed in mature form). Positions 13 to 22 (GSEDWEKDEP) are enriched in basic and acidic residues.

The protein belongs to the IL-1 family. As to quaternary structure, interacts with SMAD3. Binds IL18R1, but not to IL1R1, with lower affinity than IL18, and does not seem to act as a receptor antagonist for IL18. Interacts with cargo receptor TMED10; the interaction mediates the translocation from the cytoplasm into the ERGIC (endoplasmic reticulum-Golgi intermediate compartment) and thereby secretion. Proteolytically converted to the mature form by CASP1. In terms of tissue distribution, in general, low constitutive expression, if any, in healthy tissues; high expression in inflammatory counterparts, including in synovial tissues from individuals with active rheumatoid arthritis. Isoform A, isoform B and isoform C are expressed in testis, colon, placenta, lung and lymph node. Isoform D and isoform E were found only in testis and bone marrow. Whereas only isoform A is found in brain, only isoform B in kidney and only isoform C in heart.

The protein resides in the cytoplasm. It is found in the cytosol. It localises to the nucleus. Its subcellular location is the secreted. In terms of biological role, immune regulatory cytokine that acts as a suppressor of innate inflammatory and immune responses involved in curbing excessive inflammation. Signaling can occur via two mechanisms, intracellularly through nuclear translocation with SMAD3 and extracellularly after secretion and binding to its receptor composed of IL18R1 and IL18RAP. Suppresses, or reduces, pro-inflammatory cytokine production, including IL1A and IL6, as well as CCL12, CSF1, CSF2, CXCL13, IL1B, IL23A and IL1RN, but spares anti-inflammatory cytokines. Inhibits dendritic cell activation. The protein is Interleukin-37 of Homo sapiens (Human).